We begin with the raw amino-acid sequence, 303 residues long: Putative band 7 family protein R614 (303 aa).

It belongs to the band 7/mec-2 family.

This Acanthamoeba polyphaga (Amoeba) protein is Putative band 7 family protein R614.